Reading from the N-terminus, the 333-residue chain is Cilia- and flagella-associated protein 119 (333 aa).

Residues 1–10 (MITPSSSQSL) are compositionally biased toward polar residues. Disordered regions lie at residues 1 to 70 (MITP…ANLF) and 309 to 333 (RLSS…TKTK). Serine 34 is subject to Phosphoserine. The span at 44-58 (TDMQTESPAEATSSP) shows a compositional bias: polar residues. A coiled-coil region spans residues 284 to 319 (IKSQLSKELRQLQQLVEERLKESEERLSSKLAALEQ).

The protein resides in the cell projection. It localises to the cilium. Its subcellular location is the flagellum. The protein localises to the cytoplasmic vesicle. It is found in the secretory vesicle. The protein resides in the acrosome. It localises to the cytoplasm. The polypeptide is Cilia- and flagella-associated protein 119 (Mus musculus (Mouse)).